Consider the following 509-residue polypeptide: Cytochrome P450 monooxygenase FUP2 (509 aa).

The next 2 membrane-spanning stretches (helical) occupy residues 16-36 and 224-244; these read FGLALVISALALVSVIIYGCF and MVEALSFFLTLPGIASVFGIA. C450 lines the heme pocket.

It belongs to the cytochrome P450 family. Heme is required as a cofactor.

It is found in the membrane. It participates in secondary metabolite biosynthesis. In terms of biological role, cytochrome P450 monooxygenase; part of the gene cluster that mediates the biosynthesis of the mycotoxin fusaproliferin (FUP) that belongs to the class of bicyclic sesterterpenoids. FUP2 introduces a hydroxyl group at the C-24 position resulting in the formation of preterpestacin IIa, which can be further oxidized. The oxidation of the hydroxyl group at C-24 to an aldehyde and further to a carboxylic group takes place via unspecific alcohol and aldehyde dehydrogenases and leads to the shunt products preterpestacin IIc and preterpestacin IIb, respectively. The FUP biosynthetic pathway starts with the enzyme encoded by FUP1 that combines a C-terminal prenyltransferase domain responsible for the synthesis of geranylgeranyl diphosphate with the N-terminal terpene cyclase domain, to yield preterpestacin I. Preterpestacin I is then decorated by oxygenation steps that are catalyzed by two cytochrome P450 monooxygenases. First, FUP2 introduces a hydroxyl group at the C-24 position resulting in the formation of preterpestacin IIa. The second P450 monooxygenase catalyzes the hydroxylation at C-16 and C-17 of preterpestacin IIa, producing preterpestacin III. Subsequently, the FAD-dependent oxidoreductase FUP4 catalyzes the oxidation of the hydroxy group at the C-16 position to a keto group, leading to the formation of (-)-terpestacin, which is the immediate precursor of FUP. The final step in the proposed biosynthetic pathway is the addition of an acetyl group at the C-24 position of terpestacin, which is catalyzed by the acetyltransferase FUP5. The protein is Cytochrome P450 monooxygenase FUP2 of Fusarium proliferatum (strain ET1) (Orchid endophyte fungus).